A 79-amino-acid polypeptide reads, in one-letter code: UPF0154 protein SAG1601 (79 aa).

A helical membrane pass occupies residues 5 to 25 (IWILLIIVALFGGLVGGIFIA).

This sequence belongs to the UPF0154 family.

It is found in the membrane. This chain is UPF0154 protein SAG1601, found in Streptococcus agalactiae serotype V (strain ATCC BAA-611 / 2603 V/R).